Here is a 328-residue protein sequence, read N- to C-terminus: Phosphate acyltransferase (328 aa).

The protein belongs to the PlsX family. Homodimer. Probably interacts with PlsY.

Its subcellular location is the cytoplasm. The enzyme catalyses a fatty acyl-[ACP] + phosphate = an acyl phosphate + holo-[ACP]. It functions in the pathway lipid metabolism; phospholipid metabolism. Its function is as follows. Catalyzes the reversible formation of acyl-phosphate (acyl-PO(4)) from acyl-[acyl-carrier-protein] (acyl-ACP). This enzyme utilizes acyl-ACP as fatty acyl donor, but not acyl-CoA. In Campylobacter jejuni subsp. jejuni serotype O:6 (strain 81116 / NCTC 11828), this protein is Phosphate acyltransferase.